We begin with the raw amino-acid sequence, 2052 residues long: Genome polyprotein (2052 aa).

2 consecutive short sequence motifs ((L)YPX(n)L motif) follow at residues Tyr167–Leu171 and Tyr200–Leu205. The tract at residues Thr502 to Arg522 is disordered. Residues Met760 to Gln830 form an involved in P1-2A pentamerization region. The helical transmembrane segment at Thr1005–Ile1025 threads the bilayer. The tract at residues Ile1037 to Glu1064 is membrane-penetrating ability. Residues Lys1121–Phe1146 are a coiled coil. The helical transmembrane segment at Trp1296 to Tyr1316 threads the bilayer. Tyr1333 carries the post-translational modification O-(5'-phospho-RNA)-tyrosine. The Peptidase C3 domain occupies Asp1348–Phe1562. Residues His1397, Asp1437, and Cys1525 each act as for protease 3C activity in the active site. In terms of domain architecture, RdRp catalytic spans Asp1810–Asn1931.

Belongs to the picornaviridae polyprotein family. Homodimer. Homomultimer; probably interacts with membranes in a multimeric form. Seems to assemble into amyloid-like fibers. As to quaternary structure, homodimer. Monomer. Interacts with protein 3CD. In terms of assembly, interacts with host ACBD3. Interacts with protein 3AB. As to quaternary structure, interacts with human MAVS. In terms of assembly, homodimer; disulfide-linked. Homopentamer. Homooligomer. As to quaternary structure, interacts with capsid protein VP2. Interacts with capsid protein VP3. In terms of assembly, interacts with capsid protein VP1. Interacts with capsid protein VP3. Interacts with capsid protein VP1. Interacts with capsid protein VP2. In terms of processing, specific enzymatic cleavages by viral protease in vivo yield a variety of precursors and mature proteins. Polyprotein processing intermediates are produced, such as P1-2A which is a functional precursor of the structural proteins, VP0 which is a VP4-VP2 precursor, VP1-2A precursor, 3ABC precursor which is a stable and catalytically active precursor of 3A, 3B and 3C proteins, 3AB and 3CD precursors. The assembly signal 2A is removed from VP1-2A by a host protease, possibly host Cathepsin L. This cleavage occurs over a region of 3 amino-acids probably generating VP1 proteins with heterogeneous C-termini. During virion maturation, immature virions are rendered infectious following cleavage of VP0 into VP4 and VP2. This maturation seems to be an autocatalytic event triggered by the presence of RNA in the capsid and is followed by a conformational change of the particle. Post-translationally, the assembly signal 2A is removed from VP1-2A by a host protease, possibly host Cathepsin L in naked virions. This cleavage does not occur in enveloped virions. This cleavage occurs over a region of 3 amino-acids probably generating VP1 proteins with heterogeneous C-termini. In terms of processing, VPg is uridylylated prior to priming replication into VPg-pUpU. Unlike other picornaviruses, does not seem to be myristoylated.

Its subcellular location is the virion. The protein localises to the host endosome. It localises to the host multivesicular body. It is found in the host membrane. The protein resides in the host mitochondrion outer membrane. Its subcellular location is the host cytoplasm. The protein localises to the host cytoplasmic vesicle membrane. It catalyses the reaction RNA(n) + a ribonucleoside 5'-triphosphate = RNA(n+1) + diphosphate. It carries out the reaction a ribonucleoside 5'-triphosphate + H2O = a ribonucleoside 5'-diphosphate + phosphate + H(+). The catalysed reaction is Selective cleavage of Gln-|-Gly bond in the poliovirus polyprotein. In other picornavirus reactions Glu may be substituted for Gln, and Ser or Thr for Gly.. Its function is as follows. Capsid proteins VP1, VP2, and VP3 form a closed capsid enclosing the viral positive strand RNA genome. All these proteins contain a beta-sheet structure called beta-barrel jelly roll. Together they form an icosahedral capsid (T=3) composed of 60 copies of each VP1, VP2, and VP3, with a diameter of approximately 300 Angstroms. VP1 is situated at the 12 fivefold axes, whereas VP2 and VP3 are located at the quasi-sixfold axes. The naked capsid interacts with the host receptor HAVCR1 to provide virion attachment to and probably entry into the target cell. In terms of biological role, VP0 precursor is a component of the immature procapsids. Plays a role in the assembly of the 12 pentamers into an icosahedral structure. Has not been detected in mature virions, supposedly owing to its small size. Functionally, precursor component of immature procapsids that corresponds to an extended form of the structural protein VP1. After maturation, possibly by the host Cathepsin L, the assembly signal 2A is cleaved to give rise to the mature VP1 protein. Its function is as follows. Functions as a viroporin. Affects membrane integrity and causes an increase in membrane permeability. Involved in host intracellular membrane rearrangements probably to give rise to the viral factories. Does not disrupt calcium homeostasis or glycoprotein trafficking. Antagonizes the innate immune response of the host by suppressing IFN-beta synthesis, which it achieves by interfering with the RIG-I/IFIH1 pathway. In terms of biological role, affects membrane integrity and causes an increase in membrane permeability. Associates with and induces structural rearrangements of intracellular membranes. Displays RNA-binding activity. Functionally, the precursor 3ABC is targeted to the mitochondrial membrane where protease 3C activity cleaves and inhibits the host antiviral protein MAVS, thereby disrupting activation of IRF3 through the IFIH1/MDA5 pathway. In vivo, the protease activity of 3ABC precursor is more efficient in cleaving the 2BC precursor than that of protein 3C. The 3ABC precursor may therefore play a role in the proteolytic processing of the polyprotein. Possible viroporin. Its function is as follows. Interacts with the 3CD precursor and with RNA structures found at both the 5'- and 3'-termini of the viral genome. Since the 3AB precursor contains the hydrophobic domain 3A, it probably anchors the whole viral replicase complex to intracellular membranes on which viral RNA synthesis occurs. In terms of biological role, may serve as membrane anchor to the 3AB and 3ABC precursors via its hydrophobic domain. May interact with RNA. Acts as a primer for viral RNA replication and remains covalently bound to viral genomic RNA. VPg is uridylylated prior to priming replication into VPg-pUpU. The VPg-pUpU is then used as primer on the genomic RNA poly(A) by the RNA-dependent RNA polymerase to replicate the viral genome. Functionally, cysteine protease that generates mature viral proteins from the precursor polyprotein. In addition to its proteolytic activity, it binds to viral RNA, and thus influences viral genome replication. RNA and substrate bind cooperatively to the protease. Cleaves IKBKG/NEMO to impair innate immune signaling. Cleaves host PABPC1 which may participate in the switch of viral translation to RNA synthesis. Its function is as follows. Interacts with the 3AB precursor and with RNA structures found at both the 5'- and 3'-termini of the viral genome. Disrupts TLR3 signaling by degrading the host adapter protein TICAM1/TRIF. In terms of biological role, RNA-directed RNA polymerase 3D-POL replicates genomic and antigenomic RNA by recognizing replications specific signals. This chain is Genome polyprotein, found in Homo sapiens (Human).